We begin with the raw amino-acid sequence, 576 residues long: Epsin-1 (576 aa).

6 residues coordinate a 1,2-diacyl-sn-glycero-3-phospho-(1D-myo-inositol-4,5-bisphosphate): R8, K11, R25, N30, R63, and H73. The region spanning 12–144 is the ENTH domain; the sequence is NIVHNYSEAE…RDEDRLREER (133 aa). Residues 149 to 185 form a disordered region; sequence KTKEKLAQTATASSAAVGSGPPPEAEQAWPQSSGEEE. Positions 157–167 are enriched in low complexity; it reads TATASSAAVGS. UIM domains lie at 183 to 202, 208 to 227, and 233 to 252; these read EEEL…ADQP, EDDA…HDKE, and GDDL…TGGK. Residues 265–296 are compositionally biased toward low complexity; sequence TAPAPAPTTDPWGGPAPMAAAVPTAAPTSDPW. A disordered region spans residues 265–404; sequence TAPAPAPTTD…GGFDTEPDEF (140 aa). A run of 8 repeats spans residues 274–276, 294–296, 306–308, 319–321, 332–334, 349–351, 367–369, and 377–379. Residues 274 to 379 form an 8 X 3 AA repeats of [ED]-P-W region; that stretch reads DPWGGPAPMA…TPAPAFSDPW (106 aa). The segment covering 297 to 314 has biased composition (pro residues); sequence GGPPVPPAADPWGGPAPT. Positions 332–368 are enriched in low complexity; it reads DPWGGTPAPAAGEGPTPDPWGSSDGGVPVSGPSASDP. S382 bears the Phosphoserine; by CDK1 mark. The short motif at 402-411 is the [DE]-X(1,2)-F-X-X-[FL]-X-X-X-R motif element; that stretch reads DEFSDFDRLR. Phosphoserine is present on residues S419, S420, S435, S447, and S454. A disordered region spans residues 448–576; it reads LAEAVGSPPP…PAPNTNPFLL (129 aa). Pro residues predominate over residues 454–468; the sequence is SPPPAATPTPTPPTR. Phosphothreonine is present on residues T460, T464, and T470. A Phosphoserine modification is found at S473. T494 bears the Phosphothreonine mark. 2 repeat units span residues 502 to 504 and 518 to 520. Residues 502–574 form a 3 X 3 AA repeats of N-P-F region; that stretch reads NPFLPGGGPA…GPPAPNTNPF (73 aa). R534 carries the post-translational modification Omega-N-methylarginine. Pro residues predominate over residues 557–570; sequence GLPPMMPPGPPAPN. Residues 572–574 form repeat 3; the sequence is NPF.

It belongs to the epsin family. Monomer. Binds clathrin, ZBTB16/ZNF145 and ITSN1. Binds ubiquitinated proteins. Binds AP2A1 and AP2A2. Interacts with RALBP1 in a complex also containing NUMB and TFAP2A during interphase and mitosis. Interacts with AP2B1. Interacts with UBQLN2. Interacts with REPS2; the interaction is direct. Interacts with EPS15; the interaction is direct. Interacts with ENTREP1. Post-translationally, phosphorylated on serine and/or threonine residues in mitotic cells. Phosphorylation reduces interaction with REPS2, AP-2 and the membrane fraction. Depolarization of synaptosomes results in dephosphorylation. Ubiquitinated.

The protein localises to the cytoplasm. The protein resides in the cell membrane. Its subcellular location is the nucleus. It is found in the membrane. It localises to the clathrin-coated pit. Its function is as follows. Binds to membranes enriched in phosphatidylinositol 4,5-bisphosphate (PtdIns(4,5)P2). Modifies membrane curvature and facilitates the formation of clathrin-coated invaginations. Regulates receptor-mediated endocytosis. This is Epsin-1 (EPN1) from Homo sapiens (Human).